The primary structure comprises 511 residues: Piperic acid synthase CYP719A37 (511 aa).

Residues 7-27 form a helical membrane-spanning segment; it reads VDPALFSAFVSIIFFFLGMFL. Cys455 contacts heme.

It belongs to the cytochrome P450 family. The cofactor is heme. As to expression, specifically expressed in immature fruits and roots. Barely detectable in young leaves and flowering spadices.

The protein localises to the membrane. It is found in the endoplasmic reticulum membrane. It carries out the reaction (E,E)-feruperate + reduced [NADPH--hemoprotein reductase] + O2 = (E,E)-piperate + oxidized [NADPH--hemoprotein reductase] + 2 H2O + H(+). It functions in the pathway aromatic compound metabolism. Cytochrome P450 monooxygenase involved in the biosynthesis of aromatic piperamides natural products such as piperine (1-piperoyl-piperidine), the pungent principle contributing, together with several terpenoids, to the aromatic properties of black pepper fruits, and displaying numerous pharmacological activities such as antiproliferative, antitumor, antiangiogenesis, antioxidant, antidiabetic, antiobesity, cardioprotective, antimicrobial, antiaging, and immunomodulatory effects. Catalyzes the conversion of feruperic acid (5-(4-hydroxy-3-methoxyphenyl)-2,4-pentadienoic acid) to piperic acid. Inactive toward ferulic acid and feruperine. The chain is Piperic acid synthase CYP719A37 from Piper nigrum (Black pepper).